A 359-amino-acid chain; its full sequence is Molybdenum import ATP-binding protein ModC (359 aa).

The region spanning 1–233 is the ABC transporter domain; sequence MSGLTVSIRG…IDAESEGGGV (233 aa). An ATP-binding site is contributed by 32–39; it reads GHSGAGKT. Residues 289–355 enclose the Mop domain; the sequence is AISIRNLLPV…VKAVSVDRAA (67 aa).

It belongs to the ABC transporter superfamily. Molybdate importer (TC 3.A.1.8) family. In terms of assembly, the complex is composed of two ATP-binding proteins (ModC), two transmembrane proteins (ModB) and a solute-binding protein (ModA).

It is found in the cell inner membrane. It catalyses the reaction molybdate(out) + ATP + H2O = molybdate(in) + ADP + phosphate + H(+). Part of the ABC transporter complex ModABC involved in molybdenum import. Responsible for energy coupling to the transport system. This is Molybdenum import ATP-binding protein ModC from Brucella melitensis biotype 1 (strain ATCC 23456 / CCUG 17765 / NCTC 10094 / 16M).